We begin with the raw amino-acid sequence, 751 residues long: MVHLPLSRSRSGRRAVPDLSRYQQFYEADAADGYSTGSGLSSAAASVASLRRPGVGMGRTQSLTGYGRTRSLGAARPSYLGAPPRTYSMSSQRRANSLRSNNGFGPPAVAAGNTITVKTTETKDLQGRTRTVTRQTVKHINGVRYVETTTTMTMPDGEYPDDFYGFEGDFTAKQTSSGHVYQNARGAPDISDIAEEESLEEYLDARDTAPALRIQLRAPPRVQQQRQLQRQRRLSDTNFPARRSAKSSPARQSSEEPPATTKPHRIRFDETPQIVGIDPPTQKKAPKKQMTEQEMYMHALDAARKKVYGEISQPALEAKQPHRSTMSKRMTLRDEATLAANTPPERSRPAKREVRKKEGHSHHNFLSVLRRDSSPKRHAVQPSERVHNKEKTLEMTPDSSSASSYEEARFEHSDEMYNKALEVAKKKYHLTQENSTRDNGTTECPRTPMTSLMSTNVSSDTAESTLLGTPVYSSNAPFDRSPQPSSGCETGNTTPKSIPRRPSFLDKLVRFSQEKYGYRPRRSISSQGHKAEHEHVFTDDIPPLPDIPLVDPMQVKPKDVPLPTVEPALGPTDVSPARVADPESNIETPRTLAPARSSISSSPRRSSPPQAFQELVPLQSTQSETTGDLADALALGDNSLDLLPGRVSEISPKTSFEHFVLAPEVPETDEKPAAAPAVAAEAPLSNPPSVVVVPSATSSVPAAQGAAPGVAVTEGPSLGGPAAPVRALHATKTAAAPAKKRSFFHKLFKKY.

5 disordered regions span residues Gly-54–Ser-88, Leu-216–Met-290, Pro-314–Phe-410, Thr-431–Phe-504, and Lys-558–Gln-610. Residues Leu-216–Leu-228 show a composition bias toward low complexity. 2 stretches are compositionally biased toward basic and acidic residues: residues Glu-345 to Lys-356 and Glu-384 to Leu-393. The segment covering Thr-431–Lys-496 has biased composition (polar residues). A compositionally biased stretch (low complexity) spans Arg-596 to Pro-609.

It is found in the cell membrane. Functionally, may be involved in the control of meiotic sister-chromatid recombination. This chain is Meiotic sister-chromatid recombination protein 3 (MSC3), found in Eremothecium gossypii (strain ATCC 10895 / CBS 109.51 / FGSC 9923 / NRRL Y-1056) (Yeast).